The following is a 159-amino-acid chain: S-ribosylhomocysteine lyase (159 aa).

H53, H57, and C124 together coordinate Fe cation.

It belongs to the LuxS family. As to quaternary structure, homodimer. Requires Fe cation as cofactor.

It catalyses the reaction S-(5-deoxy-D-ribos-5-yl)-L-homocysteine = (S)-4,5-dihydroxypentane-2,3-dione + L-homocysteine. Functionally, involved in the synthesis of autoinducer 2 (AI-2) which is secreted by bacteria and is used to communicate both the cell density and the metabolic potential of the environment. The regulation of gene expression in response to changes in cell density is called quorum sensing. Catalyzes the transformation of S-ribosylhomocysteine (RHC) to homocysteine (HC) and 4,5-dihydroxy-2,3-pentadione (DPD). This is S-ribosylhomocysteine lyase from Porphyromonas gingivalis (strain ATCC BAA-308 / W83).